We begin with the raw amino-acid sequence, 529 residues long: Bifunctional purine biosynthesis protein PurH (529 aa).

In terms of domain architecture, MGS-like spans 1 to 148; sequence MQQRRPVRRA…KNHKDVAIVV (148 aa).

The protein belongs to the PurH family.

It catalyses the reaction (6R)-10-formyltetrahydrofolate + 5-amino-1-(5-phospho-beta-D-ribosyl)imidazole-4-carboxamide = 5-formamido-1-(5-phospho-D-ribosyl)imidazole-4-carboxamide + (6S)-5,6,7,8-tetrahydrofolate. The enzyme catalyses IMP + H2O = 5-formamido-1-(5-phospho-D-ribosyl)imidazole-4-carboxamide. It participates in purine metabolism; IMP biosynthesis via de novo pathway; 5-formamido-1-(5-phospho-D-ribosyl)imidazole-4-carboxamide from 5-amino-1-(5-phospho-D-ribosyl)imidazole-4-carboxamide (10-formyl THF route): step 1/1. It functions in the pathway purine metabolism; IMP biosynthesis via de novo pathway; IMP from 5-formamido-1-(5-phospho-D-ribosyl)imidazole-4-carboxamide: step 1/1. The sequence is that of Bifunctional purine biosynthesis protein PurH from Salmonella paratyphi C (strain RKS4594).